The primary structure comprises 320 residues: Polyisoprenyl-teichoic acid--peptidoglycan teichoic acid transferase TagU (320 aa).

The Cytoplasmic portion of the chain corresponds to 1-15; sequence MVSRTERKQHKKRRK. A helical; Signal-anchor for type II membrane protein transmembrane segment spans residues 16 to 36; it reads WPFWLGGILLVLLLLISGGIF. Topologically, residues 37–320 are extracellular; the sequence is LIYNQVGAVV…SEITGHMQEQ (284 aa).

Belongs to the LytR/CpsA/Psr (LCP) family.

It is found in the cell membrane. It participates in cell wall biogenesis. In terms of biological role, may catalyze the final step in cell wall teichoic acid biosynthesis, the transfer of the anionic cell wall polymers (APs) from their lipid-linked precursor to the cell wall peptidoglycan (PG). This Oceanobacillus iheyensis (strain DSM 14371 / CIP 107618 / JCM 11309 / KCTC 3954 / HTE831) protein is Polyisoprenyl-teichoic acid--peptidoglycan teichoic acid transferase TagU.